The sequence spans 185 residues: Elongation factor P (185 aa).

This sequence belongs to the elongation factor P family.

It is found in the cytoplasm. Its pathway is protein biosynthesis; polypeptide chain elongation. Functionally, involved in peptide bond synthesis. Stimulates efficient translation and peptide-bond synthesis on native or reconstituted 70S ribosomes in vitro. Probably functions indirectly by altering the affinity of the ribosome for aminoacyl-tRNA, thus increasing their reactivity as acceptors for peptidyl transferase. The polypeptide is Elongation factor P (Desulfovibrio desulfuricans (strain ATCC 27774 / DSM 6949 / MB)).